Consider the following 471-residue polypeptide: Ubiquitin carboxyl-terminal hydrolase 8 (471 aa).

Residues C4, H6, C46, C49, C60, C63, C68, H73, H77, H83, C96, and C99 each contribute to the Zn(2+) site. The UBP-type; degenerate zinc finger occupies 22–122; it reads KTCNAARYIL…ILAKYWDDVC (101 aa). The USP domain maps to 137 to 468; that stretch reads SGLINMGSTC…QAYLLFYTIR (332 aa). Catalysis depends on C146, which acts as the Nucleophile. Zn(2+) contacts are provided by H170, C174, C182, C185, H250, C271, C273, H276, C289, C292, C336, and C339. Residue H427 is the Proton acceptor of the active site.

Belongs to the peptidase C19 family. UBP8 subfamily. As to quaternary structure, component of the 1.8 MDa SAGA (Spt-Ada-Gcn5 acetyltransferase) complex, which is composed of 19 subunits TRA1, SPT7, TAF5, NGG1/ADA3, SGF73, SPT20/ADA5, SPT8, TAF12, TAF6, HFI1/ADA1, UBP8, GCN5, ADA2, SPT3, SGF29, TAF10, TAF9, SGF11 and SUS1. The SAGA complex is composed of 4 modules, namely the HAT (histone acetyltransferase) module (GCN5, ADA2, NGG1/ADA3 and SGF29), the DUB (deubiquitinating) module (UBP8, SGF11, SGF73 and SUS1), the core or TAF (TBP-associated factor) module (TAF5, TAF6, TAF9, TAF10 and TAF12), and the Tra1 or SPT (Suppressor of Ty) module (TRA1, HFI1/ADA1, SPT3, SPT7, SPT8 and SPT20/ADA5). The Tra1/SPT module binds activators, the core module recruits TBP (TATA-binding protein), the HAT module contains the histone H3 acetyltransferase GCN5, and the DUB module comprises the histone H2B deubiquitinase UBP8. Also identified in an altered form of SAGA, named SALSA (SAGA altered, Spt8 absent) or SLIK (SAGA-like) complex, which contains a C-terminal truncated form of SPT7 and is missing SPT8. However, it has been shown that the SAGA and SAGA-like SALSA/SLIK transcriptional coactivators are structurally and biochemically equivalent.

The protein resides in the nucleus. The enzyme catalyses Thiol-dependent hydrolysis of ester, thioester, amide, peptide and isopeptide bonds formed by the C-terminal Gly of ubiquitin (a 76-residue protein attached to proteins as an intracellular targeting signal).. Histone deubiquitinating enzyme component of the transcription coactivator SAGA complex. SAGA acts as a general cofactor required for essentially all RNA polymerase II transcription. At the promoters, SAGA is required for transcription pre-initiation complex (PIC) recruitment. It influences RNA polymerase II transcriptional activity through different activities such as TBP interaction (via core/TAF module) and promoter selectivity, interaction with transcription activators (via Tra1/SPT module), and chromatin modification through histone acetylation (via HAT module) and deubiquitination (via DUB module). SAGA preferentially acetylates histones H3 (to form H3K9ac, H3K14ac, H3K18ac and H3K23ac) and H2B and deubiquitinates histone H2B. SAGA interacts with DNA via upstream activating sequences (UASs). Also identified in a modified version of SAGA named SALSA or SLIK. The cleavage of SPT7 and the absence of the SPT8 subunit in SLIK neither drive any major conformational differences in its structure compared with SAGA, nor significantly affect HAT, DUB, or DNA-binding activities. Within the DUB module, the correctly positioned zinc finger domains of SGF11 and SGF73 are both required to fully activate the ubiquitin hydrolase UBP8. The DUB module is also linked to the splicing efficiency of many transcripts. This is Ubiquitin carboxyl-terminal hydrolase 8 (UBP8) from Saccharomyces cerevisiae (strain ATCC 204508 / S288c) (Baker's yeast).